The primary structure comprises 130 residues: Interferon alpha-inducible protein 27-like protein 2 (130 aa).

3 helical membrane passes run Ala8 to Phe28, Met43 to Leu63, and Val66 to Leu86. The tract at residues Ser93–Glu130 is disordered.

This sequence belongs to the IFI6/IFI27 family.

It localises to the mitochondrion membrane. Plays a role in the apoptotic process and has a pro-apoptotic activity. This chain is Interferon alpha-inducible protein 27-like protein 2, found in Homo sapiens (Human).